The chain runs to 223 residues: Small ribosomal subunit protein uS3 (223 aa).

A KH type-2 domain is found at isoleucine 39–lysine 108.

Belongs to the universal ribosomal protein uS3 family. As to quaternary structure, part of the 30S ribosomal subunit. Forms a tight complex with proteins S10 and S14.

Its function is as follows. Binds the lower part of the 30S subunit head. Binds mRNA in the 70S ribosome, positioning it for translation. This Clostridium botulinum (strain Hall / ATCC 3502 / NCTC 13319 / Type A) protein is Small ribosomal subunit protein uS3.